Here is a 92-residue protein sequence, read N- to C-terminus: Alpha-conotoxin FrXXA (92 aa).

A signal peptide spans 1 to 24 (MPKLEMMLLVLLILPLSYFDSAGG). Residues 25–45 (QAVKVDGHGDGMDRYLQRDDR) constitute a propeptide that is removed on maturation. 4 disulfide bridges follow: Cys-63–Cys-72, Cys-68–Cys-80, Cys-73–Cys-90, and Cys-78–Cys-92.

Belongs to the conotoxin D superfamily. Homodimer; disulfide-linked. The homodimer contains 10 disulfide bonds. Expressed by the venom duct.

It is found in the secreted. Alpha-conotoxins act on postsynaptic membranes, they bind to the nicotinic acetylcholine receptors (nAChR) and thus inhibit them. Through its two C-terminal domains, this homodimeric protein would bind to two nAChR allosteric sites, located outside the nAChR C-loop of the principal binding face and at the adjacent binding interface in a clockwise direction. This toxin blocks both neuronal and muscular subtypes: human alpha-7/CHRNA7, human alpha-3-beta-2 (CHRNA3-CHRNB2), human alpha-4-beta-2 (CHRNA4-CHRNB2), mouse adult muscular subtype alpha-1-beta-1-delta-epsilon (CHRNA1-CHRNB1-CHRND-CHRNE), and mouse fetal muscular subtype alpha-1-beta-1-gamma-delta (CHRNA1-CHRNB1-CHRNG-CHRND). Shows different dissociation rates towards the different subtypes, with a very slow rate towards alpha-7 subtype (almost irreversible), followed by the adult muscular subtype, the fetal muscular subtype, alpha-3-beta-2 and alpha-4-beta-2 (almost entirely reversible within a few minutes of washing). The chain is Alpha-conotoxin FrXXA from Conus fergusoni (Ferguson's cone).